The sequence spans 299 residues: 33 kDa chaperonin (299 aa).

2 disulfide bridges follow: Cys-240-Cys-242 and Cys-273-Cys-276.

It belongs to the HSP33 family. Under oxidizing conditions two disulfide bonds are formed involving the reactive cysteines. Under reducing conditions zinc is bound to the reactive cysteines and the protein is inactive.

It localises to the cytoplasm. Its function is as follows. Redox regulated molecular chaperone. Protects both thermally unfolding and oxidatively damaged proteins from irreversible aggregation. Plays an important role in the bacterial defense system toward oxidative stress. This is 33 kDa chaperonin from Thermosynechococcus vestitus (strain NIES-2133 / IAM M-273 / BP-1).